Reading from the N-terminus, the 275-residue chain is Large ribosomal subunit protein uL2 (275 aa).

Disordered regions lie at residues 24–54 (LYKG…VRHQ) and 223–275 (VAMN…RHKR). Composition is skewed to basic and acidic residues over residues 25-38 (YKGR…EKKT) and 229-241 (DHPH…RTGE).

The protein belongs to the universal ribosomal protein uL2 family. In terms of assembly, part of the 50S ribosomal subunit. Forms a bridge to the 30S subunit in the 70S ribosome.

One of the primary rRNA binding proteins. Required for association of the 30S and 50S subunits to form the 70S ribosome, for tRNA binding and peptide bond formation. It has been suggested to have peptidyltransferase activity; this is somewhat controversial. Makes several contacts with the 16S rRNA in the 70S ribosome. The chain is Large ribosomal subunit protein uL2 from Azoarcus sp. (strain BH72).